Reading from the N-terminus, the 428-residue chain is Serine--tRNA ligase (428 aa).

An L-serine-binding site is contributed by 231–233 (TAE). Position 262 to 264 (262 to 264 (RAE)) interacts with ATP. Position 285 (glutamate 285) interacts with L-serine. 349–352 (EISS) lines the ATP pocket. Serine 385 provides a ligand contact to L-serine.

This sequence belongs to the class-II aminoacyl-tRNA synthetase family. Type-1 seryl-tRNA synthetase subfamily. Homodimer. The tRNA molecule binds across the dimer.

It localises to the cytoplasm. It carries out the reaction tRNA(Ser) + L-serine + ATP = L-seryl-tRNA(Ser) + AMP + diphosphate + H(+). It catalyses the reaction tRNA(Sec) + L-serine + ATP = L-seryl-tRNA(Sec) + AMP + diphosphate + H(+). It functions in the pathway aminoacyl-tRNA biosynthesis; selenocysteinyl-tRNA(Sec) biosynthesis; L-seryl-tRNA(Sec) from L-serine and tRNA(Sec): step 1/1. Catalyzes the attachment of serine to tRNA(Ser). Is also able to aminoacylate tRNA(Sec) with serine, to form the misacylated tRNA L-seryl-tRNA(Sec), which will be further converted into selenocysteinyl-tRNA(Sec). The sequence is that of Serine--tRNA ligase from Methylorubrum populi (strain ATCC BAA-705 / NCIMB 13946 / BJ001) (Methylobacterium populi).